We begin with the raw amino-acid sequence, 436 residues long: Citrate synthase (436 aa).

Catalysis depends on residues His311 and Asp370.

Belongs to the citrate synthase family.

The enzyme catalyses oxaloacetate + acetyl-CoA + H2O = citrate + CoA + H(+). The protein operates within carbohydrate metabolism; tricarboxylic acid cycle; isocitrate from oxaloacetate: step 1/2. This Rickettsia typhi (strain ATCC VR-144 / Wilmington) protein is Citrate synthase (gltA).